The following is a 1814-amino-acid chain: U3 small nucleolar RNA-associated protein 10 (1814 aa).

One copy of the HEAT 1 repeat lies at 583–620 (LDFQALLPFLLVALTDASERVRREAAAALAAVGSLYKK). 2 helical membrane-spanning segments follow: residues 942 to 962 (IQSG…AIVN) and 998 to 1018 (ALLL…HSVM). HEAT repeat units lie at residues 1042–1079 (QTID…AFEH), 1249–1286 (LTLV…QNPE), 1293–1331 (IRVL…KYGK), and 1770–1807 (ALLP…VLGE).

The protein belongs to the HEATR1/UTP10 family. In terms of assembly, component of the ribosomal small subunit (SSU) processome.

Its subcellular location is the nucleus. The protein localises to the nucleolus. It is found in the membrane. Functionally, involved in nucleolar processing of pre-18S ribosomal RNA. Involved in ribosome biosynthesis. This is U3 small nucleolar RNA-associated protein 10 from Neosartorya fischeri (strain ATCC 1020 / DSM 3700 / CBS 544.65 / FGSC A1164 / JCM 1740 / NRRL 181 / WB 181) (Aspergillus fischerianus).